Here is a 566-residue protein sequence, read N- to C-terminus: Chaperone ric-8 (566 aa).

It belongs to the synembryn family. As to quaternary structure, interacts with GDP-bound G-alpha proteins goa-1 and gpa-16. Does not interact with G-alpha proteins when they are in complex with subunits beta and gamma. Present throughout the nervous system in juveniles and adults (at protein level).

It localises to the cytoplasm. The protein localises to the cell cortex. Chaperone that specifically binds and folds some, but not all, nascent G alpha proteins prior to G protein heterotrimer formation, promoting their stability and activity. Also acts as a guanine nucleotide exchange factor (GEF) for G alpha proteins by stimulating exchange of bound GDP for free GTP. Able to facilitate synaptic transmission in the nervous system probably by activating G(q)-alpha (egl-30). Also able to activate the G(s)-alpha in synaptic signaling network. Plays a key role in asymmetric spindle positioning, a step for asymmetric cell division that generates cell diversity during development by activating G(i)-alpha protein goa-1 and gpa-16 independently of G-protein coupled receptors. While it acts as a GEF for goa-1, it has no GEF activity toward gpa-16. In addition to its GEF activity, it is required for cortical subcellular localization of G-alpha proteins such as gpa-16. Also required for the interaction of goa-1 and gpr-1/2, suggesting that it may act by generating G-alpha proteins free from G-beta-gamma subunits, enabling gpr-1/2 to mediate asymmetric cell division. The protein is Chaperone ric-8 (ric-8) of Caenorhabditis elegans.